The chain runs to 642 residues: Mini-chromosome maintenance complex-binding protein (642 aa).

A compositionally biased stretch (polar residues) spans 151–161 (ARVSPSTSYTP). A disordered region spans residues 151–200 (ARVSPSTSYTPSRHKRSYEDDEDMDLQPNKQKDQHSGARQAGGLGGLHWR). Ser-154 carries the post-translational modification Phosphoserine. Thr-160 is subject to Phosphothreonine. Phosphoserine occurs at positions 167 and 298.

It belongs to the MCMBP family. In terms of assembly, interacts with the MCM complex: associates with the MCM3-7 complex which lacks MCM2, while it does not interact with the MCM complex when MCM2 is present (MCM2-7 complex). Interacts with the RPA complex, when composed of all RPA1, RPA2 and RPA3 components, but not with RPA1 or RPA2 alone.

It is found in the nucleus. Functionally, associated component of the MCM complex that acts as a regulator of DNA replication. Binds to the MCM complex during late S phase and promotes the disassembly of the MCM complex from chromatin, thereby acting as a key regulator of pre-replication complex (pre-RC) unloading from replicated DNA. Can dissociate the MCM complex without addition of ATP; probably acts by destabilizing interactions of each individual subunits of the MCM complex. Required for sister chromatid cohesion. This Rattus norvegicus (Rat) protein is Mini-chromosome maintenance complex-binding protein (Mcmbp).